Reading from the N-terminus, the 327-residue chain is Biotin synthase (327 aa).

Positions 49 to 282 (FNKEKIDLCS…NKVIRLCGGR (234 aa)) constitute a Radical SAM core domain. Cys-67, Cys-71, and Cys-74 together coordinate [4Fe-4S] cluster. [2Fe-2S] cluster-binding residues include Ser-110, Cys-142, Cys-201, and Arg-277.

This sequence belongs to the radical SAM superfamily. Biotin synthase family. As to quaternary structure, homodimer. Requires [4Fe-4S] cluster as cofactor. [2Fe-2S] cluster is required as a cofactor.

The enzyme catalyses (4R,5S)-dethiobiotin + (sulfur carrier)-SH + 2 reduced [2Fe-2S]-[ferredoxin] + 2 S-adenosyl-L-methionine = (sulfur carrier)-H + biotin + 2 5'-deoxyadenosine + 2 L-methionine + 2 oxidized [2Fe-2S]-[ferredoxin]. Its pathway is cofactor biosynthesis; biotin biosynthesis; biotin from 7,8-diaminononanoate: step 2/2. Functionally, catalyzes the conversion of dethiobiotin (DTB) to biotin by the insertion of a sulfur atom into dethiobiotin via a radical-based mechanism. The polypeptide is Biotin synthase (Methanococcus maripaludis (strain DSM 14266 / JCM 13030 / NBRC 101832 / S2 / LL)).